Consider the following 456-residue polypeptide: Bifunctional protein GlmU (456 aa).

The interval 1-229 is pyrophosphorylase; that stretch reads MLNNAMSVVI…LSEVEGVNNR (229 aa). UDP-N-acetyl-alpha-D-glucosamine-binding positions include 11-14, Lys-25, Gln-76, 81-82, 103-105, Gly-140, Glu-154, Asn-169, and Asn-227; these read LAAG, GT, and YGD. Asp-105 provides a ligand contact to Mg(2+). Asn-227 provides a ligand contact to Mg(2+). The tract at residues 230–250 is linker; it reads LQLSRLERVYQSEQAEKLLLA. An N-acetyltransferase region spans residues 251–456; that stretch reads GVMLRDPARF…EGWRRPVKKK (206 aa). UDP-N-acetyl-alpha-D-glucosamine-binding residues include Arg-333 and Lys-351. Catalysis depends on His-363, which acts as the Proton acceptor. UDP-N-acetyl-alpha-D-glucosamine-binding residues include Tyr-366 and Asn-377. Residues Ala-380, 386 to 387, Ser-405, Ala-423, and Arg-440 each bind acetyl-CoA; that span reads NY.

The protein in the N-terminal section; belongs to the N-acetylglucosamine-1-phosphate uridyltransferase family. This sequence in the C-terminal section; belongs to the transferase hexapeptide repeat family. As to quaternary structure, homotrimer. Mg(2+) serves as cofactor.

It localises to the cytoplasm. The enzyme catalyses alpha-D-glucosamine 1-phosphate + acetyl-CoA = N-acetyl-alpha-D-glucosamine 1-phosphate + CoA + H(+). It carries out the reaction N-acetyl-alpha-D-glucosamine 1-phosphate + UTP + H(+) = UDP-N-acetyl-alpha-D-glucosamine + diphosphate. The protein operates within nucleotide-sugar biosynthesis; UDP-N-acetyl-alpha-D-glucosamine biosynthesis; N-acetyl-alpha-D-glucosamine 1-phosphate from alpha-D-glucosamine 6-phosphate (route II): step 2/2. It participates in nucleotide-sugar biosynthesis; UDP-N-acetyl-alpha-D-glucosamine biosynthesis; UDP-N-acetyl-alpha-D-glucosamine from N-acetyl-alpha-D-glucosamine 1-phosphate: step 1/1. Its pathway is bacterial outer membrane biogenesis; LPS lipid A biosynthesis. Catalyzes the last two sequential reactions in the de novo biosynthetic pathway for UDP-N-acetylglucosamine (UDP-GlcNAc). The C-terminal domain catalyzes the transfer of acetyl group from acetyl coenzyme A to glucosamine-1-phosphate (GlcN-1-P) to produce N-acetylglucosamine-1-phosphate (GlcNAc-1-P), which is converted into UDP-GlcNAc by the transfer of uridine 5-monophosphate (from uridine 5-triphosphate), a reaction catalyzed by the N-terminal domain. The chain is Bifunctional protein GlmU from Escherichia coli O8 (strain IAI1).